The sequence spans 218 residues: Cytochrome b6 (218 aa).

A helical membrane pass occupies residues 35 to 55 (IFYCLGGITLVCFLVQFATGF). A heme c-binding site is contributed by Cys-38. Positions 89 and 103 each coordinate heme b. A run of 3 helical transmembrane segments spans residues 93 to 113 (ASMM…TGGF), 119 to 139 (LTWV…VTGY), and 189 to 209 (LHTF…FLMI). The heme b site is built by His-190 and His-205.

The protein belongs to the cytochrome b family. PetB subfamily. The 4 large subunits of the cytochrome b6-f complex are cytochrome b6, subunit IV (17 kDa polypeptide, PetD), cytochrome f and the Rieske protein, while the 4 small subunits are PetG, PetL, PetM and PetN. The complex functions as a dimer. Heme b is required as a cofactor. Requires heme c as cofactor.

It localises to the cellular thylakoid membrane. Functionally, component of the cytochrome b6-f complex, which mediates electron transfer between photosystem II (PSII) and photosystem I (PSI), cyclic electron flow around PSI, and state transitions. The sequence is that of Cytochrome b6 from Prochlorococcus marinus (strain MIT 9303).